Here is a 399-residue protein sequence, read N- to C-terminus: Ubiquitin-like modifier-activating enzyme 5 (399 aa).

5 residues coordinate ATP: G76, D97, K120, N143, and N177. Positions 219 and 222 each coordinate Zn(2+). The Glycyl thioester intermediate role is filled by C243. Zn(2+)-binding residues include C296 and C301.

Belongs to the ubiquitin-activating E1 family. UBA5 subfamily.

In terms of biological role, E1-like enzyme which activates UFM1. In Drosophila mojavensis (Fruit fly), this protein is Ubiquitin-like modifier-activating enzyme 5.